The sequence spans 220 residues: Small ribosomal subunit protein eS8 (220 aa).

Belongs to the eukaryotic ribosomal protein eS8 family.

The polypeptide is Small ribosomal subunit protein eS8 (RPS8A) (Leishmania major).